The following is a 168-amino-acid chain: Small ribosomal subunit protein uS5 (168 aa).

In terms of domain architecture, S5 DRBM spans 14–77; sequence FEERVVSINR…EAAKKNLITV (64 aa).

Belongs to the universal ribosomal protein uS5 family. Part of the 30S ribosomal subunit. Contacts proteins S4 and S8.

In terms of biological role, with S4 and S12 plays an important role in translational accuracy. Located at the back of the 30S subunit body where it stabilizes the conformation of the head with respect to the body. This chain is Small ribosomal subunit protein uS5, found in Lactococcus lactis subsp. lactis (strain IL1403) (Streptococcus lactis).